The following is a 322-amino-acid chain: Outer membrane protein assembly factor BamC (322 aa).

Positions Met1–Ala22 are cleaved as a signal peptide.

The protein belongs to the BamC family. Part of the Bam complex.

Its subcellular location is the cell outer membrane. In terms of biological role, part of the outer membrane protein assembly complex, which is involved in assembly and insertion of beta-barrel proteins into the outer membrane. This chain is Outer membrane protein assembly factor BamC, found in Oceanimonas sp. (strain GK1 / IBRC-M 10197).